Reading from the N-terminus, the 344-residue chain is Heat-inducible transcription repressor HrcA (344 aa).

This sequence belongs to the HrcA family.

In terms of biological role, negative regulator of class I heat shock genes (grpE-dnaK-dnaJ and groELS operons). Prevents heat-shock induction of these operons. This chain is Heat-inducible transcription repressor HrcA, found in Streptococcus uberis (strain ATCC BAA-854 / 0140J).